Consider the following 489-residue polypeptide: Aklavinone 12-hydroxylase DnrF (489 aa).

Residues 17–18 (LG), E37, Q121, and L145 each bind FAD. Catalysis depends on Y224, which acts as the Proton acceptor. D308 contributes to the FAD binding site. An aklavinone-binding site is contributed by G317. 2 disordered regions span residues 402-428 (VAAE…RAPH) and 455-489 (EGGA…PPAN). Low complexity predominate over residues 468–482 (RIWASASTSISSAAM).

This sequence belongs to the PheA/TfdB FAD monooxygenase family. Monomer. The cofactor is FAD.

The enzyme catalyses aklavinone + NADPH + O2 + H(+) = epsilon-rhodomycinone + NADP(+) + H2O. It participates in antibiotic biosynthesis; daunorubicin biosynthesis. It functions in the pathway antibiotic biosynthesis; carminomycin biosynthesis. Its pathway is antibiotic biosynthesis; rhodomycin biosynthesis. Its function is as follows. Involved in the biosynthesis of the anthracyclines carminomycin, rhodomycin and daunorubicin (daunomycin) which are aromatic polyketide antibiotics that exhibit high cytotoxicity and are widely applied in the chemotherapy of a variety of cancers. Catalyzes the incorporation of a hydroxyl group at position C-11 of aklavinone, resulting in epsilon-rhodomycinone. It cannot accept substrates glycosylated at position C-7. It can also hydroxylate 11-deoxycarminomycinone and can use both NAD or NADP. The chain is Aklavinone 12-hydroxylase DnrF (dnrF) from Streptomyces peucetius.